A 144-amino-acid polypeptide reads, in one-letter code: Snaclec coagulation factor IX/factor X-binding protein subunit B1 (144 aa).

The first 23 residues, 1-23 (MGRFIFVSFGLLVVFLSLSGTAA), serve as a signal peptide directing secretion. 3 cysteine pairs are disulfide-bonded: Cys-25–Cys-36, Cys-53–Cys-142, and Cys-119–Cys-134. A C-type lectin domain is found at 32 to 143 (YEGHCYKPFN…CRMMANFVCE (112 aa)).

Belongs to the snaclec family. As to quaternary structure, heterodimer of subunits A and B1; disulfide-linked. In terms of tissue distribution, expressed by the venom gland.

The protein localises to the secreted. In terms of biological role, anticoagulant protein which binds to the gamma-carboxyglutamic acid-domain regions of factors IX (F9) and factor X (F10) in the presence of calcium with a 1 to 1 stoichiometry. This chain is Snaclec coagulation factor IX/factor X-binding protein subunit B1, found in Trimeresurus stejnegeri (Chinese green tree viper).